We begin with the raw amino-acid sequence, 782 residues long: U-box domain-containing protein 7 (782 aa).

Residues 271 to 345 (VPPEELRCPI…ASWCEQNGTQ (75 aa)) form the U-box domain. ARM repeat units follow at residues 456 to 499 (EEAR…NLAV), 502 to 541 (NRNKELMLTSGVIRLLEKMISSAESHGSATALYLNLSCLD), 542 to 581 (EAKSVIGSSQAVPFLVQLLQKEIETQCKLDALHALYNLST), 583 to 623 (SPNI…NLAS), and 626 to 665 (EGKDEAVSSQGMISSLATVLDMGDTTEQEQAVSCLLILCN). Residues 707–729 (EERQQRDQPSSNRDEPPQKEPAR) are compositionally biased toward basic and acidic residues. The disordered stretch occupies residues 707–765 (EERQQRDQPSSNRDEPPQKEPARKSLSAPLSVHGSTPASASVQDYEPRVLSKSMSRRKS). Over residues 739–748 (HGSTPASASV) the composition is skewed to polar residues.

The catalysed reaction is S-ubiquitinyl-[E2 ubiquitin-conjugating enzyme]-L-cysteine + [acceptor protein]-L-lysine = [E2 ubiquitin-conjugating enzyme]-L-cysteine + N(6)-ubiquitinyl-[acceptor protein]-L-lysine.. It functions in the pathway protein modification; protein ubiquitination. In terms of biological role, functions as an E3 ubiquitin ligase. This chain is U-box domain-containing protein 7 (PUB7), found in Arabidopsis thaliana (Mouse-ear cress).